The sequence spans 203 residues: High-molecular weight cobalt-containing nitrile hydratase subunit alpha (203 aa).

Co(3+)-binding residues include Cys102, Cys105, Ser106, and Cys107.

The protein belongs to the nitrile hydratase subunit alpha family. In terms of assembly, heterodimer of an alpha and a beta chain. Co(3+) serves as cofactor.

It carries out the reaction an aliphatic primary amide = an aliphatic nitrile + H2O. Functionally, NHase catalyzes the hydration of various nitrile compounds to the corresponding amides. This is High-molecular weight cobalt-containing nitrile hydratase subunit alpha (nhhA) from Rhodococcus rhodochrous.